We begin with the raw amino-acid sequence, 386 residues long: Succinate--CoA ligase [ADP-forming] subunit beta (386 aa).

ATP is bound by residues Lys-46, Glu-99, Ala-102, and Glu-107. Residues Asn-199 and Asp-213 each contribute to the Mg(2+) site. Residues Asn-264 and 321–323 (GIM) each bind substrate.

The protein belongs to the succinate/malate CoA ligase beta subunit family. Heterotetramer of two alpha and two beta subunits. The cofactor is Mg(2+).

It catalyses the reaction succinate + ATP + CoA = succinyl-CoA + ADP + phosphate. The enzyme catalyses GTP + succinate + CoA = succinyl-CoA + GDP + phosphate. Its pathway is carbohydrate metabolism; tricarboxylic acid cycle; succinate from succinyl-CoA (ligase route): step 1/1. Succinyl-CoA synthetase functions in the citric acid cycle (TCA), coupling the hydrolysis of succinyl-CoA to the synthesis of either ATP or GTP and thus represents the only step of substrate-level phosphorylation in the TCA. The beta subunit provides nucleotide specificity of the enzyme and binds the substrate succinate, while the binding sites for coenzyme A and phosphate are found in the alpha subunit. In Orientia tsutsugamushi (strain Boryong) (Rickettsia tsutsugamushi), this protein is Succinate--CoA ligase [ADP-forming] subunit beta.